The chain runs to 131 residues: Small ribosomal subunit protein uS11 (131 aa).

It belongs to the universal ribosomal protein uS11 family. In terms of assembly, part of the 30S ribosomal subunit. Interacts with proteins S7 and S18. Binds to IF-3.

Functionally, located on the platform of the 30S subunit, it bridges several disparate RNA helices of the 16S rRNA. Forms part of the Shine-Dalgarno cleft in the 70S ribosome. The polypeptide is Small ribosomal subunit protein uS11 (Bacillus licheniformis (strain ATCC 14580 / DSM 13 / JCM 2505 / CCUG 7422 / NBRC 12200 / NCIMB 9375 / NCTC 10341 / NRRL NRS-1264 / Gibson 46)).